Here is a 791-residue protein sequence, read N- to C-terminus: Major facilitator superfamily domain-containing protein 6 (791 aa).

A2 bears the N-acetylalanine mark. T10 carries the post-translational modification Phosphothreonine. Residues 22–47 are disordered; that stretch reads LADPFNGISREPEPPSNETPSSTETS. Residues 37-47 are compositionally biased toward low complexity; that stretch reads SNETPSSTETS. The next 6 helical transmembrane spans lie at 73-93, 105-125, 132-152, 286-306, 335-355, and 369-389; these read VFYFFFYSAYGSLYPLLPVYY, LLVGIRYFIEFCSAPFWGVVA, KIVLLFSLLCWVLFNLGIGFV, AIFLVILVVVIIGEFFSASSV, WGLAMLSVGIGIDYTHIEVLI, and QIVFIVFGVLMTMALIVATQF. The segment at 407-427 is disordered; sequence EIPQVERNNSTESSEETPTTT. Over residues 416-427 the composition is skewed to low complexity; the sequence is STESSEETPTTT. The next 6 helical transmembrane spans lie at 450–470, 479–499, 507–527, 544–564, 579–599, and 605–625; these read VLFVAWFMGFGYGFVFTFLYW, TTLFGVCSVLSHVSELTAYFF, IGHIRVLYIGLACNTARYIYI, GVTHAAIWAACISYLSAAVPP, LGLGRGCGAMIGGVLVNYFGA, and GIGMACLVILLLFALIQWLAV. Disordered stretches follow at residues 662–687 and 723–791; these read MPRIEPRLPPKKTKHQEEQEDVNKPA and LQGT…AGGH. A compositionally biased stretch (polar residues) spans 750–768; sequence SRNQPSPDAAASQTQTSPA. The span at 782–791 shows a compositional bias: low complexity; the sequence is QQAQLAAGGH.

The protein belongs to the major facilitator superfamily. MFSD6 family. In terms of assembly, may interact with HLA-B62. As to expression, widely expressed. Expression levels in peripheral blood mononuclear cells are highly variable between individuals, including no expression at all.

The protein resides in the membrane. In Homo sapiens (Human), this protein is Major facilitator superfamily domain-containing protein 6 (MFSD6).